The primary structure comprises 94 residues: Integration host factor subunit beta (94 aa).

It belongs to the bacterial histone-like protein family. Heterodimer of an alpha and a beta chain.

In terms of biological role, this protein is one of the two subunits of integration host factor, a specific DNA-binding protein that functions in genetic recombination as well as in transcriptional and translational control. The protein is Integration host factor subunit beta of Azoarcus sp. (strain BH72).